The chain runs to 113 residues: Meiotically up-regulated gene 98 protein, mitochondrial (113 aa).

It localises to the mitochondrion. Has a role in meiosis. In Schizosaccharomyces pombe (strain 972 / ATCC 24843) (Fission yeast), this protein is Meiotically up-regulated gene 98 protein, mitochondrial (mug98).